We begin with the raw amino-acid sequence, 715 residues long: Protein MTSS 2 (715 aa).

Residues 1 to 249 (METAEKECGA…EQVIKDLKGS (249 aa)) enclose the IMD domain. The stretch at 134–156 (HEIKKKSSDTLKLQKKARKGKGD) forms a coiled coil. Composition is skewed to low complexity over residues 253–274 (WSYQ…SMCS), 284–295 (SSVSSHDSGFVS), and 312–330 (TSQK…TCQS). Disordered regions lie at residues 253 to 405 (WSYQ…EVSP), 420 to 485 (LEHQ…RNSN), and 527 to 562 (IRRT…PTVP). T257 is modified (phosphothreonine). The residue at position 261 (S261) is a Phosphoserine. Residues 331–341 (VSECSSPTSDW) are compositionally biased toward polar residues. Positions 360–369 (DRVEHLRDTE) are enriched in basic and acidic residues. Position 404 is a phosphoserine (S404). Over residues 429–442 (SLQYSSGYSTQTTT) the composition is skewed to low complexity. Residues 443–455 (PSCSEDTIPSQGS) are compositionally biased toward polar residues. Phosphoserine is present on residues S542, S564, S575, S587, S597, and S602. At T606 the chain carries Phosphothreonine. The tract at residues 661–690 (FPFPTALSATPSEETPTPPPAATSDPPAED) is disordered. A WH2 domain is found at 687-704 (PAEDMLVAIRRGVRLRRT).

This sequence belongs to the MTSS family. In terms of assembly, interacts (via IMD domain) with RAC1; this interaction may be important to potentiate PDGF-induced RAC1 activation.

It is found in the cytoplasm. The protein localises to the cell projection. It localises to the ruffle. Functionally, involved in plasma membrane dynamics. Potentiated PDGF-mediated formation of membrane ruffles and lamellipodia in fibroblasts, acting via RAC1 activation. May function in actin bundling. This chain is Protein MTSS 2 (Mtss2), found in Mus musculus (Mouse).